The sequence spans 345 residues: Phosphate acyltransferase (345 aa).

This sequence belongs to the PlsX family. In terms of assembly, homodimer. Probably interacts with PlsY.

The protein localises to the cytoplasm. It carries out the reaction a fatty acyl-[ACP] + phosphate = an acyl phosphate + holo-[ACP]. It functions in the pathway lipid metabolism; phospholipid metabolism. Catalyzes the reversible formation of acyl-phosphate (acyl-PO(4)) from acyl-[acyl-carrier-protein] (acyl-ACP). This enzyme utilizes acyl-ACP as fatty acyl donor, but not acyl-CoA. This chain is Phosphate acyltransferase, found in Nitratidesulfovibrio vulgaris (strain ATCC 29579 / DSM 644 / CCUG 34227 / NCIMB 8303 / VKM B-1760 / Hildenborough) (Desulfovibrio vulgaris).